The primary structure comprises 153 residues: Endoribonuclease YbeY (153 aa).

Residues His118, His122, and His128 each coordinate Zn(2+).

The protein belongs to the endoribonuclease YbeY family. Zn(2+) is required as a cofactor.

The protein localises to the cytoplasm. Functionally, single strand-specific metallo-endoribonuclease involved in late-stage 70S ribosome quality control and in maturation of the 3' terminus of the 16S rRNA. The polypeptide is Endoribonuclease YbeY (Staphylococcus carnosus (strain TM300)).